The primary structure comprises 376 residues: N-acetyldiaminopimelate deacetylase (376 aa).

D69 is a catalytic residue. E128 functions as the Proton acceptor in the catalytic mechanism.

Belongs to the peptidase M20A family. N-acetyldiaminopimelate deacetylase subfamily.

The catalysed reaction is N-acetyl-(2S,6S)-2,6-diaminopimelate + H2O = (2S,6S)-2,6-diaminopimelate + acetate. It functions in the pathway amino-acid biosynthesis; L-lysine biosynthesis via DAP pathway; LL-2,6-diaminopimelate from (S)-tetrahydrodipicolinate (acetylase route): step 3/3. Catalyzes the conversion of N-acetyl-diaminopimelate to diaminopimelate and acetate. This is N-acetyldiaminopimelate deacetylase from Streptococcus pneumoniae (strain JJA).